Reading from the N-terminus, the 993-residue chain is DNA-binding protein SMUBP-2 (993 aa).

Ala2 carries the post-translational modification N-acetylalanine. ATP is bound by residues 213 to 220 (GPPGTGKT), Gln402, Tyr441, and Glu570. The segment at 637–783 (TAFEYLDDIV…KARHITVSRR (147 aa)) is SS DNA-binding. Disordered stretches follow at residues 650-723 (YTHE…GPDR), 765-815 (LRHD…EPVT), and 837-872 (RQQS…KGPV). Polar residues-rich tracts occupy residues 667-683 (PSTS…SGQE) and 703-716 (HVQS…NGSD). One can recognise an R3H domain in the interval 721–784 (PDRTEHFRAT…ARHITVSRRS (64 aa)). Residues 765–775 (LRHDSTGEGKA) show a composition bias toward basic and acidic residues. Positions 784 to 794 (SPASSGSVAPQ) are enriched in low complexity. Phosphoserine occurs at positions 797 and 800. Residues 837–847 (RQQSSQAQTAK) show a composition bias toward polar residues. The short motif at 862–866 (KKKKK) is the Nuclear localization signal element. The AN1-type; degenerate zinc finger occupies 889 to 938 (VKADNTCSFSKCSVSTTTLGQFCMHCSHRYYLSHHLPEIHGCGEKARAHA). 4 residues coordinate Zn(2+): Cys911, Cys914, His928, and Cys930. Residues 953 to 993 (GTKDRALDPAKRAQLQRRLDKKLGELSSQRTSRKKEKERGT) are disordered. Residues 954–976 (TKDRALDPAKRAQLQRRLDKKLG) are compositionally biased toward basic and acidic residues.

The protein belongs to the DNA2/NAM7 helicase family. As to quaternary structure, homooligomer. Interacts with RUVBL1. Interacts with RUVBL2. Interacts with GTF3C1. Interacts with ABT1. Interacts with ribosomes. As to expression, in all tissues examined.

It is found in the nucleus. Its subcellular location is the cytoplasm. The protein localises to the cell projection. It localises to the axon. It carries out the reaction ATP + H2O = ADP + phosphate + H(+). Functionally, 5' to 3' helicase that unwinds RNA and DNA duplexes in an ATP-dependent reaction. Specific to 5'-phosphorylated single-stranded guanine-rich sequences. May play a role in RNA metabolism, ribosome biogenesis or initiation of translation. May play a role in regulation of transcription. Interacts with tRNA-Tyr. The protein is DNA-binding protein SMUBP-2 (Ighmbp2) of Mus musculus (Mouse).